Here is a 260-residue protein sequence, read N- to C-terminus: Opacity protein opA58 (260 aa).

Residues 1–23 (MNPAPKKPSLLFSSLLFSSAAQA) form the signal peptide.

The protein belongs to the opacity porin family.

It localises to the cell outer membrane. Implicated in a number of adherence functions. OPA proteins are implicated in pathogenesis and are subject to phase variation. The polypeptide is Opacity protein opA58 (opaJ) (Neisseria gonorrhoeae).